The primary structure comprises 215 residues: MAFLISALLILIGYLLGSIPTGYLTGLHLKGIDVRQHGSGSTGATNILRTIGKRAAIFVLTVDLAKAMLAVILVKLWFFVESPEMIPLEWKSWLVVFAAIAAVLGHSKSIFLNFTGGKSVASSLGVLLVLNPIVALGTLGSFLAMLSLSRIVSLSSITGVVAVNVLMFGLHQPLPYCLFGVIVGLYVTFRHRTNIIRLLQGTEPRLGQKLQQEGS.

5 consecutive transmembrane segments (helical) span residues 1 to 21 (MAFLISALLILIGYLLGSIPT), 57 to 77 (IFVLTVDLAKAMLAVILVKLW), 85 to 105 (MIPLEWKSWLVVFAAIAAVLG), 126 to 146 (VLLVLNPIVALGTLGSFLAML), and 165 to 185 (VLMFGLHQPLPYCLFGVIVGL).

Belongs to the PlsY family. In terms of assembly, probably interacts with PlsX.

It is found in the cell inner membrane. It carries out the reaction an acyl phosphate + sn-glycerol 3-phosphate = a 1-acyl-sn-glycero-3-phosphate + phosphate. It functions in the pathway lipid metabolism; phospholipid metabolism. In terms of biological role, catalyzes the transfer of an acyl group from acyl-phosphate (acyl-PO(4)) to glycerol-3-phosphate (G3P) to form lysophosphatidic acid (LPA). This enzyme utilizes acyl-phosphate as fatty acyl donor, but not acyl-CoA or acyl-ACP. In Crocosphaera subtropica (strain ATCC 51142 / BH68) (Cyanothece sp. (strain ATCC 51142)), this protein is Glycerol-3-phosphate acyltransferase.